Consider the following 367-residue polypeptide: Heme A synthase (367 aa).

The next 5 helical transmembrane spans lie at 25–45 (ALRLWLGFVLLALFCLVLVGG), 111–131 (LIARGIGVIFALPLIFFWLTG), 139–159 (WPLVGILALGGLQGFIGWWMV), 174–194 (LATHLVMACLIFAGCMWIMRG), and 210–230 (GFAAAIAIFALFQIYLGALVA). H274 provides a ligand contact to heme. The next 3 membrane-spanning stretches (helical) occupy residues 276–296 (IGAYTLFALTLINMVIALRAA), 305–325 (AVVLFSLVTLQAAIGIATLLM), and 327–347 (VPLHWGLLHQAGALVVFGFAV). H335 provides a ligand contact to heme.

The protein belongs to the COX15/CtaA family. Type 2 subfamily. Interacts with CtaB. It depends on heme b as a cofactor.

It is found in the cell membrane. It carries out the reaction Fe(II)-heme o + 2 A + H2O = Fe(II)-heme a + 2 AH2. It participates in porphyrin-containing compound metabolism; heme A biosynthesis; heme A from heme O: step 1/1. Its function is as follows. Catalyzes the conversion of heme O to heme A by two successive hydroxylations of the methyl group at C8. The first hydroxylation forms heme I, the second hydroxylation results in an unstable dihydroxymethyl group, which spontaneously dehydrates, resulting in the formyl group of heme A. The polypeptide is Heme A synthase (Rhizobium etli (strain CIAT 652)).